The following is a 316-amino-acid chain: Adenine deaminase (316 aa).

3 residues coordinate Zn(2+): H14, H16, and H194. E197 serves as the catalytic Proton donor. D275 contacts Zn(2+). D276 serves as a coordination point for substrate.

Belongs to the metallo-dependent hydrolases superfamily. Adenosine and AMP deaminases family. Adenine deaminase type 2 subfamily. Zn(2+) is required as a cofactor.

The enzyme catalyses adenine + H2O + H(+) = hypoxanthine + NH4(+). Functionally, catalyzes the hydrolytic deamination of adenine to hypoxanthine. Plays an important role in the purine salvage pathway and in nitrogen catabolism. The chain is Adenine deaminase from Pseudomonas aeruginosa (strain UCBPP-PA14).